Consider the following 765-residue polypeptide: Phosphoribosylformylglycinamidine synthase subunit PurL (765 aa).

Histidine 41 is an active-site residue. ATP is bound by residues tyrosine 44 and lysine 83. Glutamate 85 contributes to the Mg(2+) binding site. Substrate contacts are provided by residues 86–89 (SHNH) and arginine 108. Histidine 87 acts as the Proton acceptor in catalysis. Residue aspartate 109 coordinates Mg(2+). Position 232 (glutamine 232) interacts with substrate. Aspartate 260 lines the Mg(2+) pocket. Position 304–306 (304–306 (ESQ)) interacts with substrate. The ATP site is built by aspartate 503 and glycine 540. Asparagine 541 lines the Mg(2+) pocket. Substrate is bound at residue serine 543.

It belongs to the FGAMS family. Monomer. Part of the FGAM synthase complex composed of 1 PurL, 1 PurQ and 2 PurS subunits.

The protein resides in the cytoplasm. It carries out the reaction N(2)-formyl-N(1)-(5-phospho-beta-D-ribosyl)glycinamide + L-glutamine + ATP + H2O = 2-formamido-N(1)-(5-O-phospho-beta-D-ribosyl)acetamidine + L-glutamate + ADP + phosphate + H(+). Its pathway is purine metabolism; IMP biosynthesis via de novo pathway; 5-amino-1-(5-phospho-D-ribosyl)imidazole from N(2)-formyl-N(1)-(5-phospho-D-ribosyl)glycinamide: step 1/2. In terms of biological role, part of the phosphoribosylformylglycinamidine synthase complex involved in the purines biosynthetic pathway. Catalyzes the ATP-dependent conversion of formylglycinamide ribonucleotide (FGAR) and glutamine to yield formylglycinamidine ribonucleotide (FGAM) and glutamate. The FGAM synthase complex is composed of three subunits. PurQ produces an ammonia molecule by converting glutamine to glutamate. PurL transfers the ammonia molecule to FGAR to form FGAM in an ATP-dependent manner. PurS interacts with PurQ and PurL and is thought to assist in the transfer of the ammonia molecule from PurQ to PurL. This Synechococcus sp. (strain WH7803) protein is Phosphoribosylformylglycinamidine synthase subunit PurL.